A 94-amino-acid polypeptide reads, in one-letter code: Core protein OPG142 (94 aa).

It belongs to the orthopoxvirus OPG142 family. As to quaternary structure, part of a complex composed of the kinase OPG054, OPG092, OPG100, OPG114, OPG115, OPG142 and OPG157.

The protein resides in the host cytoplasm. Its subcellular location is the virion. Functionally, late protein which is a part of a large complex required for early virion morphogenesis. This complex participates in the formation of virosomes and the incorporation of virosomal contents into nascent immature virions. Required for the stability and kinase activity of OPG054. This Cynomys gunnisoni (Gunnison's prairie dog) protein is Core protein OPG142 (OPG142).